Consider the following 20-residue polypeptide: Brevinin-1DYc (20 aa).

Residues Cys-14 and Cys-20 are joined by a disulfide bond.

As to expression, expressed by the skin glands.

It is found in the secreted. Antimicrobial peptide. Has low activity against the Gram-positive bacterium S.aureus and the Gram-negative bacterium E.coli (MIC&lt;15 uM). Has a strong hemolytic activity. The chain is Brevinin-1DYc from Rana dybowskii (Dybovsky's frog).